Here is a 269-residue protein sequence, read N- to C-terminus: Tryptophan synthase alpha chain (269 aa).

Catalysis depends on proton acceptor residues E49 and D60.

This sequence belongs to the TrpA family. In terms of assembly, tetramer of two alpha and two beta chains.

It catalyses the reaction (1S,2R)-1-C-(indol-3-yl)glycerol 3-phosphate + L-serine = D-glyceraldehyde 3-phosphate + L-tryptophan + H2O. It functions in the pathway amino-acid biosynthesis; L-tryptophan biosynthesis; L-tryptophan from chorismate: step 5/5. Functionally, the alpha subunit is responsible for the aldol cleavage of indoleglycerol phosphate to indole and glyceraldehyde 3-phosphate. The sequence is that of Tryptophan synthase alpha chain from Ectopseudomonas mendocina (strain ymp) (Pseudomonas mendocina).